Reading from the N-terminus, the 125-residue chain is Large ribosomal subunit protein bL12 (125 aa).

This sequence belongs to the bacterial ribosomal protein bL12 family. In terms of assembly, homodimer. Part of the ribosomal stalk of the 50S ribosomal subunit. Forms a multimeric L10(L12)X complex, where L10 forms an elongated spine to which 2 to 4 L12 dimers bind in a sequential fashion. Binds GTP-bound translation factors.

Functionally, forms part of the ribosomal stalk which helps the ribosome interact with GTP-bound translation factors. Is thus essential for accurate translation. In Cereibacter sphaeroides (strain ATCC 17023 / DSM 158 / JCM 6121 / CCUG 31486 / LMG 2827 / NBRC 12203 / NCIMB 8253 / ATH 2.4.1.) (Rhodobacter sphaeroides), this protein is Large ribosomal subunit protein bL12.